Reading from the N-terminus, the 283-residue chain is MTVQKSKNPQVDIAEDNAFFPSEYSLSQYTSPVSDLDGVDYPKPYRGKHKILVIAADERYLPTDNGKLFSTGNHPIETLLPLYHLHAAGFEFEVATISGLMTKFEYWAMPHKDEKVMPFFEQHKSLFRNPKKLADVVASLNADSEYAAIFVPGGHGALIGLPESQDVAAALQWAIKNDRFVISLCHGPAAFLALRHGDNPLNGYSICAFPDAADKQTPEIGYMPGHLTWYFGEELKKMGMNIINDDIAGRVHKDRKVLTGDSPFAANALGKLAAQEMLAAYAG.

Zn(2+) contacts are provided by His-86, Glu-91, and His-123. Cys-185 acts as the Nucleophile in catalysis.

It belongs to the peptidase C56 family. HchA subfamily. As to quaternary structure, homodimer.

The protein resides in the cytoplasm. The enzyme catalyses N(omega)-(1-hydroxy-2-oxopropyl)-L-arginyl-[protein] + H2O = lactate + L-arginyl-[protein] + H(+). It catalyses the reaction N(6)-(1-hydroxy-2-oxopropyl)-L-lysyl-[protein] + H2O = lactate + L-lysyl-[protein] + H(+). The catalysed reaction is S-(1-hydroxy-2-oxopropyl)-L-cysteinyl-[protein] + H2O = lactate + L-cysteinyl-[protein] + H(+). It carries out the reaction N(omega)-(1-hydroxy-2-oxoethyl)-L-arginyl-[protein] + H2O = L-arginyl-[protein] + glycolate + H(+). The enzyme catalyses N(6)-(1-hydroxy-2-oxoethyl)-L-lysyl-[protein] + H2O = glycolate + L-lysyl-[protein] + H(+). It catalyses the reaction S-(1-hydroxy-2-oxoethyl)-L-cysteinyl-[protein] + H2O = glycolate + L-cysteinyl-[protein] + H(+). The catalysed reaction is N(2)-(1-hydroxy-2-oxopropyl)-dGTP + H2O = lactate + dGTP + H(+). It carries out the reaction N(2)-(1-hydroxy-2-oxopropyl)-GTP + H2O = lactate + GTP + H(+). The enzyme catalyses N(2)-(1-hydroxy-2-oxopropyl)-GDP + H2O = lactate + GDP + H(+). It catalyses the reaction N(2)-(1-hydroxy-2-oxopropyl)-GMP + H2O = lactate + GMP + H(+). The catalysed reaction is N(2)-(1-hydroxy-2-oxoethyl)-dGTP + H2O = dGTP + glycolate + H(+). It carries out the reaction N(2)-(1-hydroxy-2-oxoethyl)-GTP + H2O = glycolate + GTP + H(+). The enzyme catalyses N(2)-(1-hydroxy-2-oxoethyl)-GDP + H2O = glycolate + GDP + H(+). It catalyses the reaction N(2)-(1-hydroxy-2-oxoethyl)-GMP + H2O = glycolate + GMP + H(+). The catalysed reaction is an N(2)-(1-hydroxy-2-oxopropyl)-guanosine in RNA + H2O = a guanosine in RNA + lactate + H(+). It carries out the reaction an N(2)-(1-hydroxy-2-oxopropyl)-2'-deoxyguanosine in DNA + H2O = a 2'-deoxyguanosine in DNA + lactate + H(+). The enzyme catalyses an N(2)-(1-hydroxy-2-oxoethyl)-guanosine in RNA + H2O = a guanosine in RNA + glycolate + H(+). It catalyses the reaction an N(2)-(1-hydroxy-2-oxoethyl)-2'-deoxyguanosine in DNA + H2O = a 2'-deoxyguanosine in DNA + glycolate + H(+). Its function is as follows. Protein and nucleotide deglycase that catalyzes the deglycation of the Maillard adducts formed between amino groups of proteins or nucleotides and reactive carbonyl groups of glyoxals. Thus, functions as a protein deglycase that repairs methylglyoxal- and glyoxal-glycated proteins, and releases repaired proteins and lactate or glycolate, respectively. Deglycates cysteine, arginine and lysine residues in proteins, and thus reactivates these proteins by reversing glycation by glyoxals. Acts on early glycation intermediates (hemithioacetals and aminocarbinols), preventing the formation of Schiff bases and advanced glycation endproducts (AGE). Also functions as a nucleotide deglycase able to repair glycated guanine in the free nucleotide pool (GTP, GDP, GMP, dGTP) and in DNA and RNA. Is thus involved in a major nucleotide repair system named guanine glycation repair (GG repair), dedicated to reversing methylglyoxal and glyoxal damage via nucleotide sanitization and direct nucleic acid repair. Plays an important role in protecting cells from carbonyl stress. The polypeptide is Protein/nucleic acid deglycase HchA (Escherichia coli O8 (strain IAI1)).